Here is a 258-residue protein sequence, read N- to C-terminus: UPF0246 protein LHK_02295 (258 aa).

It belongs to the UPF0246 family.

This chain is UPF0246 protein LHK_02295, found in Laribacter hongkongensis (strain HLHK9).